Here is a 342-residue protein sequence, read N- to C-terminus: Sorting nexin-15 (342 aa).

Positions 1–130 (MSRQAKDDFL…EFFRGGEVTR (130 aa)) constitute a PX domain. Positions 51, 53, 87, and 96 each coordinate a 1,2-diacyl-sn-glycero-3-phospho-(1D-myo-inositol-3-phosphate). Arginine 105 carries the omega-N-methylarginine modification. Residues serine 201 and serine 227 each carry the phosphoserine modification. A disordered region spans residues 245-267 (DQEPWEPGGQEEEEDGEGGPTPA). Positions 265–342 (TPAYLSQATE…LRLHLSQLPP (78 aa)) constitute an MIT domain.

This sequence belongs to the sorting nexin family. In terms of assembly, homodimer. Interacts with SNX1, SNX2 and SNX4. As to expression, widely expressed.

The protein resides in the cytoplasm. It is found in the membrane. The protein localises to the cytoplasmic vesicle membrane. In terms of biological role, may be involved in several stages of intracellular trafficking. Overexpression of SNX15 disrupts the normal trafficking of proteins from the plasma membrane to recycling endosomes or the TGN. This Homo sapiens (Human) protein is Sorting nexin-15 (SNX15).